The chain runs to 371 residues: Cathepsin W (371 aa).

The signal sequence occupies residues 1–21; sequence MTLTAHLSYFLVLLLAGQGLS. Residues 22–125 constitute a propeptide that is removed on maturation; the sequence is DSLLTKDAGP…KVESNTWGES (104 aa). N-linked (GlcNAc...) asparagine glycans are attached at residues Asn-48 and Asn-112. 3 cysteine pairs are disulfide-bonded: Cys-148/Cys-189, Cys-182/Cys-224, and Cys-282/Cys-347. Cys-151 is a catalytic residue. N-linked (GlcNAc...) asparagine glycosylation occurs at Asn-203. Catalysis depends on residues His-289 and Asn-326. An N-linked (GlcNAc...) asparagine glycan is attached at Asn-344.

It belongs to the peptidase C1 family.

It is found in the endoplasmic reticulum. May have a specific function in the mechanism or regulation of T-cell cytolytic activity. The sequence is that of Cathepsin W (Ctsw) from Mus musculus (Mouse).